The sequence spans 272 residues: MSGRGEPTMKTIIVGIDGSHAAITAALWGVDEAISRAVPLRLVSVIKPTHPSPDDYDRDLAHAERSLREAQSAVEAAGKLVKIETDIPRGPAGPVLVEASRDAEMICVGSVGIGRYASSILGSTATELAEKAHCPVAVMRSKVDQPASDINWIVVRMTDAPDNEAVLEYAAREAKLRQAPILALGGRPEELREIPDGEFERRVQDWHHRHPDVRVYPITTHTGIARFLADHDERVQLAVIGGGEAGQLARLVGPSGHPVFRHAECSVLVVRR.

Residues Gly-15, 109–115 (GSVGIGR), and 123–124 (ST) each bind ATP.

It belongs to the universal stress protein A family.

The polypeptide is Universal stress protein MT2699 (Mycobacterium tuberculosis (strain CDC 1551 / Oshkosh)).